The chain runs to 513 residues: Ectonucleoside triphosphate diphosphohydrolase 1 (513 aa).

Residues 1–16 (MEDRRESELKVFCSKN) lie on the Cytoplasmic side of the membrane. Residues 17 to 37 (ILSILGFSCIIAVIALLALGL) traverse the membrane as a helical segment. The Extracellular segment spans residues 38-481 (TQNKALPENV…SPPLPHSTYV (444 aa)). A glycan (N-linked (GlcNAc...) asparagine) is linked at Asn73. Catalysis depends on Glu174, which acts as the Proton acceptor. N-linked (GlcNAc...) asparagine glycosylation is found at Asn227 and Asn245. Intrachain disulfides connect Cys255–Cys300 and Cys281–Cys327. N-linked (GlcNAc...) asparagine glycans are attached at residues Asn307 and Asn336. A disulfide bridge links Cys340 with Cys345. A glycan (N-linked (GlcNAc...) asparagine) is linked at Asn373. Cys393 and Cys416 are oxidised to a cystine. N-linked (GlcNAc...) asparagine glycosylation occurs at Asn460. The chain crosses the membrane as a helical span at residues 482-502 (FLMVLFSLILLAVIIVGIVVF). Residues 503 to 513 (HKPSYFWKDMV) lie on the Cytoplasmic side of the membrane.

The protein belongs to the GDA1/CD39 NTPase family. Homodimer; disulfide-linked. Ca(2+) serves as cofactor. The cofactor is Mg(2+). Post-translationally, N-glycosylated. The N-terminus is blocked. In terms of processing, palmitoylated on Cys-13; which is required for caveola targeting.

It localises to the membrane. Its subcellular location is the caveola. It carries out the reaction a ribonucleoside 5'-triphosphate + 2 H2O = a ribonucleoside 5'-phosphate + 2 phosphate + 2 H(+). The catalysed reaction is a ribonucleoside 5'-triphosphate + H2O = a ribonucleoside 5'-diphosphate + phosphate + H(+). The enzyme catalyses a ribonucleoside 5'-diphosphate + H2O = a ribonucleoside 5'-phosphate + phosphate + H(+). It catalyses the reaction ATP + 2 H2O = AMP + 2 phosphate + 2 H(+). It carries out the reaction ATP + H2O = ADP + phosphate + H(+). The catalysed reaction is ADP + H2O = AMP + phosphate + H(+). The enzyme catalyses CTP + 2 H2O = CMP + 2 phosphate + 2 H(+). It catalyses the reaction CTP + H2O = CDP + phosphate + H(+). It carries out the reaction CDP + H2O = CMP + phosphate + H(+). The catalysed reaction is GTP + 2 H2O = GMP + 2 phosphate + 2 H(+). The enzyme catalyses GTP + H2O = GDP + phosphate + H(+). It catalyses the reaction GDP + H2O = GMP + phosphate + H(+). It carries out the reaction ITP + 2 H2O = IMP + 2 phosphate + 2 H(+). The catalysed reaction is ITP + H2O = IDP + phosphate + H(+). The enzyme catalyses IDP + H2O = IMP + phosphate + H(+). It catalyses the reaction UTP + 2 H2O = UMP + 2 phosphate + 2 H(+). It carries out the reaction UTP + H2O = UDP + phosphate + H(+). The catalysed reaction is UDP + H2O = UMP + phosphate + H(+). Functionally, catalyzes the hydrolysis of both di- and triphosphate nucleotides (NDPs and NTPs) and hydrolyze NTPs to nucleotide monophosphates (NMPs) in two distinct successive phosphate-releasing steps, with NDPs as intermediates and participates in the regulation of extracellular levels of nucleotides. By hydrolyzing proinflammatory ATP and platelet-activating ADP to AMP, it blocks platelet aggregation and supports blood flow. The protein is Ectonucleoside triphosphate diphosphohydrolase 1 of Bos taurus (Bovine).